The chain runs to 891 residues: MKILKSLVLLVLFMAMPAKADDAFSWMSTSFGGLKSLFGCLEVPEFTSFQEGNIGISLSTAGIWQSTGNTVQKGKLLKINWSTSGITLEPRKYLVLYRIDPRFSMPQVFIKTYNYSKLQFEALGFPRFVTDNNSETPGTIPPDKDLDALSFTKMSDFVKYFNYSNGNSRIEVKAGDVVNISLVGKDNFFSPNTLKLPNTVDNILTQELDSSIFAASALYTQSNLGDFDNRIIYSSAEQVCNMIDKERKSVCSGTGTATKYKNTDNGVIVGKPMITGAVQYFMGLIKACPANAGINTSPACYYDQGRGMIIKVGGQVIKGQDQSFVNSGSTQSSFIYYQATSGGIMDFTSDWQVSNMFSNSVLMNDWSRNFSNYASFVDYINKNDWSANFLYFGCYSMIVEIGNGANLINPDDQQNIKLEYLITSDGTLPDPSVRGMPVDYNFATDAPQDGYLWLRVVNPNSNIQGVVSVNYANYTGTTWFSDIIYNGAIKPITDQFRTFSQNFYIKLVKNSAVQNLAKTALTLYVTIFGLMFVTGALKLTAVEVITRICKIAIVAFLIREESWSFFNTYFFSAFTDGIDFFVTNVVGATSSRSNIFGFIDPIFDKYTNGRIWGLLFIELLQIHNGLAFIAIITIYSLITYFRAILEVIIGYVIAFIGVTVMISLAPFFIILMLFEKTKSLFDNWISTLLSYVVQPTILLIFFLLIDQVLSEQLLKVVVRACWDTLIPIKIGLDLTNLGIPIHFSFTLPFLPGIPFYVPDVPEISSSNILTNNANTFLVLFTTALLFYSYCLMSYSLVTFVNIVVGMLTNVTPARISGNYQERSDPVGAVMQDIDSVTKPIKKAAMAPARVFKDKIIDQNYKARKAEVGGEFTNKFLAERNDVKKEEGEKKE.

Residues 1–20 form the signal peptide; it reads MKILKSLVLLVLFMAMPAKA. The next 6 membrane-spanning stretches (helical) occupy residues 525–545, 568–588, 614–634, 652–672, 685–705, and 776–796; these read VTIF…VEVI, TYFF…VVGA, LLFI…IITI, VIAF…IILM, ISTL…FLLI, and FLVL…SYSL.

It belongs to the TrbL/VirB6 family.

It is found in the cell membrane. This is an uncharacterized protein from Rickettsia conorii (strain ATCC VR-613 / Malish 7).